A 351-amino-acid polypeptide reads, in one-letter code: Holliday junction branch migration complex subunit RuvB (351 aa).

A large ATPase domain (RuvB-L) region spans residues 1 to 186; the sequence is MDEKIETRLI…FGIVQRLEFY (186 aa). Residues Ile25, Arg26, Gly67, Lys70, Thr71, Thr72, 133 to 135, Arg176, Tyr186, and Arg223 each bind ATP; that span reads EDF. Thr71 lines the Mg(2+) pocket. The interval 187-257 is small ATPAse domain (RuvB-S); that stretch reads RIPDLIHIVK…IAKEALDLLN (71 aa). The segment at 260-351 is head domain (RuvB-H); the sequence is IRGLDVMDRK…ENFDLLGKVE (92 aa). DNA contacts are provided by Arg296, Arg315, and Arg320.

The protein belongs to the RuvB family. Homohexamer. Forms an RuvA(8)-RuvB(12)-Holliday junction (HJ) complex. HJ DNA is sandwiched between 2 RuvA tetramers; dsDNA enters through RuvA and exits via RuvB. An RuvB hexamer assembles on each DNA strand where it exits the tetramer. Each RuvB hexamer is contacted by two RuvA subunits (via domain III) on 2 adjacent RuvB subunits; this complex drives branch migration. In the full resolvosome a probable DNA-RuvA(4)-RuvB(12)-RuvC(2) complex forms which resolves the HJ.

It is found in the cytoplasm. It carries out the reaction ATP + H2O = ADP + phosphate + H(+). Its function is as follows. The RuvA-RuvB-RuvC complex processes Holliday junction (HJ) DNA during genetic recombination and DNA repair, while the RuvA-RuvB complex plays an important role in the rescue of blocked DNA replication forks via replication fork reversal (RFR). RuvA specifically binds to HJ cruciform DNA, conferring on it an open structure. The RuvB hexamer acts as an ATP-dependent pump, pulling dsDNA into and through the RuvAB complex. RuvB forms 2 homohexamers on either side of HJ DNA bound by 1 or 2 RuvA tetramers; 4 subunits per hexamer contact DNA at a time. Coordinated motions by a converter formed by DNA-disengaged RuvB subunits stimulates ATP hydrolysis and nucleotide exchange. Immobilization of the converter enables RuvB to convert the ATP-contained energy into a lever motion, pulling 2 nucleotides of DNA out of the RuvA tetramer per ATP hydrolyzed, thus driving DNA branch migration. The RuvB motors rotate together with the DNA substrate, which together with the progressing nucleotide cycle form the mechanistic basis for DNA recombination by continuous HJ branch migration. Branch migration allows RuvC to scan DNA until it finds its consensus sequence, where it cleaves and resolves cruciform DNA. In Coxiella burnetii (strain CbuG_Q212) (Coxiella burnetii (strain Q212)), this protein is Holliday junction branch migration complex subunit RuvB.